A 453-amino-acid polypeptide reads, in one-letter code: UDP-N-acetylmuramate--L-alanine ligase (453 aa).

112 to 118 (GTHGKTT) provides a ligand contact to ATP.

It belongs to the MurCDEF family.

The protein localises to the cytoplasm. It carries out the reaction UDP-N-acetyl-alpha-D-muramate + L-alanine + ATP = UDP-N-acetyl-alpha-D-muramoyl-L-alanine + ADP + phosphate + H(+). The protein operates within cell wall biogenesis; peptidoglycan biosynthesis. Its function is as follows. Cell wall formation. The polypeptide is UDP-N-acetylmuramate--L-alanine ligase (Bdellovibrio bacteriovorus (strain ATCC 15356 / DSM 50701 / NCIMB 9529 / HD100)).